Here is a 747-residue protein sequence, read N- to C-terminus: Myotubularin-related protein 12 (747 aa).

The region spanning 205–643 is the Myotubularin phosphatase domain; sequence FDTLKDWCWE…PEIKVWAQRY (439 aa). Residues 449 to 558 are interaction with MTM1; that stretch reads VPVFLLFLDC…KGQRKGMRFK (110 aa). 3 positions are modified to phosphoserine: S564, S601, and S716.

Belongs to the protein-tyrosine phosphatase family. Non-receptor class myotubularin subfamily. In terms of assembly, heterodimer with lipid phosphatase MTM1. Heterodimer with lipid phosphatase MTMR2. As to expression, expressed in skeletal muscles (at protein level). Ubiquitous with prominent expression in brain, heart, kidney, placenta, and lung.

The protein localises to the cytoplasm. It localises to the sarcoplasmic reticulum. The protein resides in the myofibril. It is found in the sarcomere. Functionally, acts as an adapter for the myotubularin-related phosphatases. Regulates phosphatase MTM1 protein stability and possibly its intracellular location. By stabilizing MTM1 protein levels, required for skeletal muscle maintenance but not for myogenesis. The protein is Myotubularin-related protein 12 (MTMR12) of Homo sapiens (Human).